The chain runs to 612 residues: Threonine--tRNA ligase (612 aa).

The interval 218–509 (DHRKLGVELG…LSEHFWGNFP (292 aa)) is catalytic. Positions 310, 361, and 486 each coordinate Zn(2+).

This sequence belongs to the class-II aminoacyl-tRNA synthetase family. Homodimer. It depends on Zn(2+) as a cofactor.

It is found in the cytoplasm. The catalysed reaction is tRNA(Thr) + L-threonine + ATP = L-threonyl-tRNA(Thr) + AMP + diphosphate + H(+). Its function is as follows. Catalyzes the attachment of threonine to tRNA(Thr) in a two-step reaction: L-threonine is first activated by ATP to form Thr-AMP and then transferred to the acceptor end of tRNA(Thr). Also edits incorrectly charged L-seryl-tRNA(Thr). The polypeptide is Threonine--tRNA ligase (Helicobacter acinonychis (strain Sheeba)).